A 67-amino-acid chain; its full sequence is Bowman-Birk type proteinase inhibitor 1 (67 aa).

Cystine bridges form between cysteine 5/cysteine 59, cysteine 6/cysteine 21, cysteine 9/cysteine 55, cysteine 11/cysteine 19, cysteine 29/cysteine 36, cysteine 33/cysteine 48, and cysteine 38/cysteine 46.

Belongs to the Bowman-Birk serine protease inhibitor family. Monomer. Although dimerization may occur in solution. As to expression, seed.

Functionally, inhibits trypsin but not chymotrypsin. The inhibitor consists of 2 domains and has 2 sites of interaction with trypsin. In Dioclea glabra, this protein is Bowman-Birk type proteinase inhibitor 1.